A 156-amino-acid polypeptide reads, in one-letter code: MPRRRIIGQRKILPDPKFSSELLAKFINILMINGKKSIAENIVYSALHQLSIKVKKKELDIFIAALDNVKPVVEVKSRRVGGSTYQVPVEVRPVRRNALAMRWIIDAARKRIDRSMSIRLTNELLDALENKGAAVRKREEVHKMADANKAFAHYRW.

Belongs to the universal ribosomal protein uS7 family. Part of the 30S ribosomal subunit. Contacts proteins S9 and S11.

One of the primary rRNA binding proteins, it binds directly to 16S rRNA where it nucleates assembly of the head domain of the 30S subunit. Is located at the subunit interface close to the decoding center, probably blocks exit of the E-site tRNA. This chain is Small ribosomal subunit protein uS7, found in Buchnera aphidicola subsp. Cinara cedri (strain Cc).